Consider the following 181-residue polypeptide: Bifunctional protein PyrR (181 aa).

Residues 41–42, Arg-82, Arg-86, 103–111, Arg-136, and Val-160 contribute to the substrate site; these read TR and DDVLYTGRT. Positions 99–111 match the PRPP-binding motif; sequence IVLVDDVLYTGRT.

This sequence belongs to the purine/pyrimidine phosphoribosyltransferase family. PyrR subfamily.

It carries out the reaction UMP + diphosphate = 5-phospho-alpha-D-ribose 1-diphosphate + uracil. Probably regulates transcriptional attenuation of the pyrimidine nucleotide (pyr) operon in response to exogenous pyrimidines. In contrast to pyr attenuation in Bacillus, PyrR from Thermus could act as a translational repressor: the binding of PyrR at its proposed recognition site in the transcript would prevent initiation of translation of the leader peptide, resulting in terminator formation and reduced expression of downstream genes. Also displays uracil phosphoribosyltransferase activity. The sequence is that of Bifunctional protein PyrR (pyrR) from Thermus thermophilus (strain ATCC BAA-163 / DSM 7039 / HB27).